The following is a 372-amino-acid chain: MSFFKTAVRRFSSTSITRGMAKAIAYSEYGNPKEVLRAVSYNVPKCSKNQVNVRFLASPINPSDINQIQGVYPSKPPFTNDVCSSKPSAVAGNEGLVEVVDVGDQFKGTFSPGQWAILGSVNLGSWRTEMNIDGRSLVPVDKSAFPSIAEAATLSVNPCTAYCLLQHVVQLNKGDWFIQDGANSMVGIATIQLAKHFGYKSINVVRNRPDIEKLKEQLKSLGATIVITDEELMDRKTMKQKVPEWIQGGEVKLGIDCVSGRVAAEMAKYMSKGATMATFGGMSRQPLPVPVSLLIFKNLKFHGFWVTKWKSEHPEEFLKIIHKVEDFYRNGTLKTVNTELVSLKEDADEKTFLDTFLNAIEGHGKKIIKFEH.

The N-terminal 18 residues, methionine 1–arginine 18, are a transit peptide targeting the mitochondrion. Tyrosine 72 (proton donor) is an active-site residue. NADP(+) contacts are provided by residues asparagine 157, asparagine 183 to valine 186, arginine 206 to arginine 208, phenylalanine 279 to methionine 282, phenylalanine 304 to valine 306, and lysine 365.

The protein belongs to the zinc-containing alcohol dehydrogenase family. Quinone oxidoreductase subfamily. In terms of assembly, homodimer.

It localises to the mitochondrion matrix. The catalysed reaction is a 2,3-saturated acyl-[ACP] + NADP(+) = a (2E)-enoyl-[ACP] + NADPH + H(+). In terms of biological role, catalyzes the NADPH-dependent reduction of trans-2-enoyl thioesters in mitochondrial fatty acid synthesis (fatty acid synthesis type II). Fatty acid chain elongation in mitochondria uses acyl carrier protein (ACP) as an acyl group carrier, but the enzyme accepts both ACP and CoA thioesters as substrates in vitro. Required for respiration and the maintenance of the mitochondrial compartment. In Schizosaccharomyces pombe (strain 972 / ATCC 24843) (Fission yeast), this protein is Enoyl-[acyl-carrier-protein] reductase, mitochondrial (etr1).